The chain runs to 314 residues: uncharacterized protein (314 aa).

Residues 1–18 (MKVSLLIFLIILVGVIKS) form the signal peptide. 6 N-linked (GlcNAc...) asparagine glycosylation sites follow: asparagine 43, asparagine 96, asparagine 109, asparagine 116, asparagine 117, and asparagine 161. The segment at 252 to 314 (SMRITKNNPH…PKSIDFHHLF (63 aa)) is disordered. Composition is skewed to low complexity over residues 257 to 268 (KNNPHLNNNNNN) and 285 to 296 (KTTTKTSTKTTS).

The protein localises to the secreted. This is an uncharacterized protein from Dictyostelium discoideum (Social amoeba).